The chain runs to 358 residues: Oxidase FUB9 (358 aa).

The region spanning 6 to 350 (SSKPQIFSIQ…SPAHLSILNA (345 aa)) is the FMN hydroxy acid dehydrogenase domain. Tyr32 is an a 2-oxocarboxylate binding site. Residues Ser114, Gln138, and Thr166 each contribute to the FMN site. A 2-oxocarboxylate is bound at residue Arg175. FMN is bound at residue Lys221. Catalysis depends on His245, which acts as the Proton acceptor. Arg248 contributes to the a 2-oxocarboxylate binding site. FMN-binding positions include 276–280 (DGGFR) and 299–300 (GR).

It belongs to the FMN-dependent alpha-hydroxy acid dehydrogenase family. It depends on FMN as a cofactor.

It functions in the pathway mycotoxin biosynthesis. In terms of biological role, oxidase; part of the gene cluster that mediates the biosynthesis of fusaric acid, a mycotoxin with low to moderate toxicity to animals and humans, but with high phytotoxic properties. L-aspartate is suggested as fusaric acid amino acid precursor that is activated and further processed to O-acetyl-L-homoserine by cluster enzymes aspartate kinase FUB3 and homoserine O-acetyltransferase FUB5, as well as enzymes of the primary metabolism. The polyketide synthase (PKS) FUB1 generates the triketide trans-2-hexenal which is presumptively released by the hydrolase FUB4 and linked to the NRPS-bound amino acid precursor by NAD(P)-dependent dehydrogenase FUB6. FUB1, FUB4, and the non-canonical NRPS Fub8 may form an enzyme complex. Further processing of the NRPS-bound intermediate might be carried out by FUB6 and the sulfhydrylase FUB7, enabling a spontaneous electrocyclization to close the carbon backbone of fusaric acid. Dihydrofusaric acid is likely to be released via reduction by the thioester reductase (TR) domain of FUB8 whereupon the final oxidation to fusaric acid may (also) be performed by the FMN-dependent dehydrogenase FUB9. This Gibberella fujikuroi (strain CBS 195.34 / IMI 58289 / NRRL A-6831) (Bakanae and foot rot disease fungus) protein is Oxidase FUB9.